The primary structure comprises 481 residues: Protein hedgehog (481 aa).

The first 19 residues, 1-19, serve as a signal peptide directing secretion; the sequence is MDNQAVSALWSCASATCLS. Residues 20 to 90 constitute a propeptide that is removed on maturation; it reads LDAKRHSIEP…LALNFRHAHS (71 aa). A disordered region spans residues 26–56; the sequence is SIEPNPDGQASPDVNNNNNNHNKSTTTVDAH. Cys91 carries the N-palmitoyl cysteine lipid modification. Glu155, Glu156, Asp161, Thr191, Glu192, Asp195, and Asp197 together coordinate Ca(2+). Gly264 is lipidated: Cholesterol glycine ester.

It belongs to the hedgehog family. Interacts with shf. In terms of processing, the C-terminal part of the hedgehog protein precursor displays an autoproteolysis activity that results in the cleavage of the full-length protein into two parts (N-product and C-product). In addition, the C-terminal part displays a cholesterol transferase activity that results by the covalent attachment of a cholesterol moiety to the C-terminal of the newly generated N-product. The N-product is the active species in both local and long-range signaling, whereas the C-product has no signaling activity. Cholesterylation is required for N-product targeting to lipid rafts and multimerization. Post-translationally, N-palmitoylation by Rasp of the hedgehog N-product, within the secretory pathway, is required for the embryonic and larval patterning activities of the hedgehog signal.

It localises to the nucleus. Its subcellular location is the cytoplasm. It is found in the cell membrane. The enzyme catalyses glycyl-L-cysteinyl-[protein] + cholesterol + H(+) = [protein]-C-terminal glycyl cholesterol ester + N-terminal L-cysteinyl-[protein]. Functionally, the C-terminal part of the hedgehog protein precursor displays an autoproteolysis activity that results in the cleavage of the full-length protein into two parts (N-product and C-product). In addition, the C-terminal part displays a cholesterol transferase activity that results by the covalent attachment of a cholesterol moiety to the C-terminal of the newly generated N-product. Once cleaved, the C-product has no signaling activity and diffuses from the cell. In terms of biological role, the dually lipidated hedgehog protein N-product is a morphogen which is essential for a variety of patterning events during development. Establishes the anterior-posterior axis of the embryonic segments and patterns the larval imaginal disks. Binds to the patched (ptc) receptor, which functions in association with smoothened (smo), to activate the transcription of target genes wingless (wg), decapentaplegic (dpp) and ptc. In the absence of hh, ptc represses the constitutive signaling activity of smo through fused (fu). Essential component of a signaling pathway which regulates the Duox-dependent gut immune response to bacterial uracil; required to activate Cad99C-dependent endosome formation, norpA-dependent Ca2+ mobilization and p38 MAPK, which are essential steps in the Duox-dependent production of reactive oxygen species (ROS) in response to intestinal bacterial infection. During photoreceptor differentiation, it up-regulates transcription of Ubr3, which in turn promotes the hh-signaling pathway by mediating the ubiquitination and degradation of cos. The protein is Protein hedgehog of Drosophila hydei (Fruit fly).